Reading from the N-terminus, the 1760-residue chain is Chitin synthase csmB (1760 aa).

Residues 1-17 (MSNRFSVYSSHSTGVSS) are compositionally biased toward low complexity. Residues 1-23 (MSNRFSVYSSHSTGVSSARPSAP) are disordered. The region spanning 1–374 (MSNRFSVYSS…TVSITVVDIP (374 aa)) is the Myosin motor domain. An N-linked (GlcNAc...) asparagine glycan is attached at Asn-275. A disordered region spans residues 344–363 (LDNDPSTSGGSGPGGQWTDD). Residue Pro-374 is a region of interest, actin-binding. Transmembrane regions (helical) follow at residues 731 to 751 (IWVGFVWALTFWIPSFALRWI) and 767 to 787 (LVLMLIILLFNGVVCFYIIAF). Residues Asn-878, Asn-906, and Asn-995 are each glycosylated (N-linked (GlcNAc...) asparagine). The helical transmembrane segment at 1029–1049 (ILLSFTVLICAVILVKFVSAL) threads the bilayer. A glycan (N-linked (GlcNAc...) asparagine) is linked at Asn-1394. Transmembrane regions (helical) follow at residues 1419–1439 (FVVLVDLLGTVILPATCVYLG), 1452–1472 (FPMISIVILAGVYGLQAIIFL), and 1480–1500 (IGWMIIYICAYPIYNFILPLY). 2 N-linked (GlcNAc...) asparagine glycosylation sites follow: Asn-1584 and Asn-1652. Residues 1702–1758 (GPDEGAITEAIRACLAEVDLDTVTKKQVRALVEQRLQTTLMGDKRTFLDRQIDHELA) enclose the DEK-C domain.

In the N-terminal section; belongs to the TRAFAC class myosin-kinesin ATPase superfamily. Myosin family. The protein in the C-terminal section; belongs to the chitin synthase family. Class V subfamily.

It localises to the cell membrane. The protein resides in the cell septum. It is found in the cell tip. The catalysed reaction is [(1-&gt;4)-N-acetyl-beta-D-glucosaminyl](n) + UDP-N-acetyl-alpha-D-glucosamine = [(1-&gt;4)-N-acetyl-beta-D-glucosaminyl](n+1) + UDP + H(+). In terms of biological role, polymerizes chitin, a structural polymer of the cell wall and septum, by transferring the sugar moiety of UDP-GlcNAc to the non-reducing end of the growing chitin polymer. Plays an important role in septal growth or maintenance. Mediates colony spore formation. The sequence is that of Chitin synthase csmB from Aspergillus niger (strain ATCC MYA-4892 / CBS 513.88 / FGSC A1513).